The chain runs to 130 residues: Small ribosomal subunit protein uS8 (130 aa).

It belongs to the universal ribosomal protein uS8 family. As to quaternary structure, part of the 30S ribosomal subunit.

In terms of biological role, one of the primary rRNA binding proteins, it binds directly to 16S rRNA central domain where it helps coordinate assembly of the platform of the 30S subunit. This Thermococcus onnurineus (strain NA1) protein is Small ribosomal subunit protein uS8.